The sequence spans 7152 residues: MIKTSKYGLGFKWAPEFRWLLPDAAEELASPMKSDEGGLCPSTGQAMESVGFVYDNHVKIDCRCILGQEWHVQSNLIRDIFVHEDLHVVEVLTKTAVKSGTAILIKSPLHSLGGFPKGYVMGLFRSYKTKRYVVHHLSMTTSTTNFGEDFLGWIVPFGFMPSYVHKWFQFCRLYIEESDLIISNFKFDDYDFSVEDAYAEVHAEPKGKYSQKAYALLRQYRGIKPVLFVDQYGCDYSGKLADCLQAYGHYSLQDMRQKQSVWLANCDFDIVVAWHVVRDSRFVMRLQTIATICGIKYVAQPTEDVVDGAVVIREPVHLLSADAIVLKLPSLMKVMTHMDDFSIKSIYNVDLCDCGFVMQYGYVDCFNDNCDFYGWVSGNMMDGFSCPLCCTVYDSSEVKAQSSGVIPENPVLFTNSTDTVNPDSFNLYGYSVTPFGSCIYWSPRPGLWIPIIKSSVKSYDDLVYSGVVGCKSIVKETALITHALYLDYVQCKCGNLEQNHILGVNNSWCRQLLLNRGDYNMLLKNIDLFVKRRADFACKFAVCGDGFVPFLLDGLIPRSYYLIQSGIFFTSLMSQFSQEVSDMCLKMCILFMDRVSVATFYIEHYVNRLVTQFKLLGTTLVNKMVNWFNTMLDASAPATGWLLYQLLNGLFVVSQANFNFVALIPDYAKILVNKFYTFFKLLLECVTVDVLKDMPVLKTINGLVCIVGNKFYNVSTGLIPGFVLPCNAQEQQIYFFEGVAESVIVEDDVIENVKSSLSSYEYCQPPKSVEKICIIDNMYMGKCGDKFFPIVMNDKNICLLDQAWRFPCAGRKVNFNEKPVVMEIPSLMTVKVMFDLDSTFDDILGKVCSEFEVEKGVTVDDFVAVVCDAIENALNSCKDHPVVGYQVRAFLNKLNENVVYLFDEAGDEAMASRMYCTFAIEDVEDVISSEAVEDTIDGVVEDTINDDEDVVTGDNDDEDVVTGDNDDEDVVTGDNDDEDVVTGDNDDEDVVTGDNDDEDVVTGDNDDEDVVTGDNDDEDVVTGDNDDEDVVTGDNDDEDVVTGDNDDEDVVTGDNDDEEIVTGDNDDQIVVTGDDVDDIESVYDFDTYKALLVFNDVYNDALFVSYGSSVETETYFKVNGLWSPTITHTNCWLRSVLLVMQKLPFKFKDLAIENMWLSYKVGYNQSFVDYLLTTIPKAIVLPQGGYVADFAYWFLNQFDINAYANWCCLKCGFSFDLNGLDAVFFYGDIVSHVCKCGHNMTLIAADLPCTLHFSLFDDNFCAFCTPKKIFIAACAVDVNVCHSVAVIGDEQIDGKFVTKFSGDKFDFIVGYGMSFSMSSFELAQLYGLCITPNVCFVKGDIINVARLVKADVIVNPANGHMLHGGGVAKAIAVAAGKKFSKETAAMVKSKGVCQVGDCYVSTGGKLCKTILNIVGPDARQDGRQSYVLLARAYKHLNNYDCCLSTLISAGIFSVPADVSLTYLLGVVDKQVILVSNNKEDFDIIQKCQITSVVGTKALAVRLTANVGRVIKFETDAYKLFLSGDDCFVSNSSVIQEVLLLRHDIQLNNDVRDYLLSKMTSLPKDWRLINKFDVINGVKTVKYFECPNSIYICSQGKDFGYVCDGSFYKATVNQVCVLLAKKIDVLLTVDGVNFKSISLTVGEVFGKILGNVFCDGIDVTKLKCSDFYADKILYQYENLSLADISAVQSSFGFDQQQLLAYYNFLTVCKWSVVVNGPFFSFEQSHNNCYVNVACLMLQHINLKFNKWQWQEAWYEFRAGRPHRLVALVLAKGHFKFDEPSDATDFIRVVLKQADLSGAICELELICDCGIKQESRVGVDAVMHFGTLAKTDLFNGYKIGCNCAGRIVHCTKLNVPFLICSNTPLSKDLPDDVVAANMFMGVGVGHYTHLKCGSPYQHYDACSVKKYTGVSGCLTDCLYLKNLTQTFTSMLTNYFLDDVEMVAYNPDLSQYYCDNGKYYTKPIIKAQFKPFAKVDGVYTNFKLVGHDICAQLNDKLGFNVDLPFVEYKVTVWPVATGDVVLASDDLYVKRYFKGCETFGKPVIWLCHDEASLNSLTYFNKPSFKSENRYSVLSVDSVSEESQGNVVTSVMESQISTKEVKLKGVRKTVKIEDAIIVNDENSSIKVVKSLSLVDVWDMYLTGCDYVVWVANELSRLVKSPTVREYIRYGIKPITIPIDLLCLRDDNQTLLVPKIFKARAIEFYGFLKWLFIYVFSLLHFTNDKTIFYTTEIASKFTFNLFCLALKNAFQTFRWSIFIKGFLVVATVFLFWFNFLYINVIFSDFYLPNISVFPIFVGRIVMWIKATFGLVTICDFYSKLGVGFTSHFCNGSFICELCYSGFDMLDTYAAIDFVQYEVDRRVLFDYVSLVKLIVELVIGYSLYTVWFYPLFCLIGLQLFTTWLPDLFMLETMHWLIRFIVFVANMLPAFVLLRFYIVVTAMYKVVGFIRHIVYGCNKAGCLFCYKRNCSVRVKCSTIVGGVIRYYDITANGGTGFCVKHQWNCFNCHSFKPGNTFITVEAAIELSKELKRPVNPTDASHYVVTDIKQVGCMMRLFYDRDGQRVYDDVDASLFVDINNLLHSKVKVVPNLYVVVVESDADRANFLNAVVFYAQSLYRPILLVDKKLITTACNGISVTQTMFDVYVDTFMSHFDVDRKSFNNFVNIAHASLREGVQLEKVLDTFVGCVRKCCSIDSDVETRFITKSMISAVAAGLEFTDENYNNLVPTYLKSDNIVAADLGVLIQNGAKHVQGNVAKAANISCIWFIDTFNQLTADLQHKLKKACVKTGLKLKLTFNKQEASVPILTTPFSLKGGVVLSNLLYILFFISLICFILLWALLPTYSVYKSDIHLPAYASFKVIDNGVVRDISVNDLCFANKFFQFDQWYESTFGSFYYHNSMDCPIVVAVMDEDIGSTMFNVPTKVLRHGFHVLHFLTYAFASDSVQCYTPHIQISYNDFYASGCVLSSLCTMFKRGDGTPHPYCYSDGVMKNASLYTSLVPHTRYSLANSNGFIRFPDVISEGIVRIVRTRSMTYCRVGACEYAEEGICFNFNSSWVLNNDYYRSMPGTFCGRDLFDLFYQFFSSLIRPIDFFSLTASSIFGAILAIVVVLVFYYLIKLKRAFGDYTSVVVINVIVWCINFLMLFVFQVYPICACVYACFYFYVTLYFPSEISVIMHLQWIVMYGAIMPFWFCVTYVAMVIANHVLWLFSYCRKIGVNVCNDSTFEETSLTTFMITKDSYCRLKNSVSDVAYNRYLSLYNKYRYYSGKMDTAAYREAACSQLAKAMETFNHNNGNDVLYQPPTASVSTSFLQSGIVKMVSPTSKIEPCIVSVTYGSMTLNGLWLDDKVYCPRHVICLSSNMNEPDYSALLCRVTLGDFTIMSGRMSLTVVSYQMQGCQLVLTVSLQNPYTPKYTFGVVKPGETFTVLAAYNGRPQGAFHVTMRSSYTIKGSFLCGSCGSVGYVLTGDSVKFVYMHQLELSTGCHTGTDFTGNFYGPYRDAQVVQLPVKDYVQTVNVIAWLYAAILNNCAWFVQNDVCSIEDFNVWAMTNGFSQVKADLVLDALASMTGVSIETLLAAIKRLYMGFQGRQILGSCTFEDELAPSDVYQQLAGVKLQSKTKRFIKETIYWILISTFLFSCIISAFVKWTIFMYINTHMIGVTLCVLCFVSFMMLLVKHKHFYLTMYIIPVLCTLFYVNYLVVYKEGFRGLTYVWLSYFVPAVNFTYVYEVFYGCILCVFAIFITMHSINHDIFSLMFLVGRIVTLISMWYFGSNLEEDVLLFITAFLGTYTWTTILSLAIAKIVANWLSVNIFYFTDVPYIKLILLSYLFIGYILSCYWGFFSLLNSVFRMPMGVYNYKISVQELRYMNANGLRPPRNSFEAILLNLKLLGIGGVPVIEVSQIQSKLTDVKCANVVLLNCLQHLHVASNSRLWQYCSILHNEILSTSDLSVAFDKLAQLLIVLFANPAAVDTKCLASIDEVSDDYVQDSTVLQALQSEFVNMASFVEYEVAKKNLADAKNSGSVNQQQIKQLEKACNIAKSVYERDKAVARKLERMADLALTNMYKEARINDKKSKVVSALQTMLFSMVRKLDNQALNSILDNAVKGCVPLNAIPALAANTLTIIIPDKQVFDKVVDNVYVAYAGSVWHIQTVQDADGINKQLTDISVDSNWPLVIIANRYNEVANAVMQNNELMPHKLKIQVVNSGSDMNCNIPTQCYYNNGSSGRIVYAVLSDVDGLKYTKIIKDDGNCVVLELDPPCKFSIQDVKGLKIKYLYFIKGCNTLARGWVVGTLSSTIRLQAGVATEYAANSSILSLCAFSVDPKKTYLDYIQQGGVPIINCVKMLCDHAGTGMAITIKPEATINQDSYGGASVCIYCRARVEHPDVDGLCKLRGKFVQVPLGIKDPILYVLTHDVCQVCGFWRDGSCSCVGSGVAVQSKDLNFLNRVRGTSVNARLVPCASGLSTDVQLRAFDICNTNRAGIGLYYKVNCCRFQRIDDDGNKLDKFFVVKRTNLEVYNKEKTYYELTKSCGVVAEHDFFTFDIDGSRVPHIVRKNLSKYTMLDLCYALRHFDCNDCSVLCEILCEYADCKESYFSKKDWYDFVENPDIINIYKKLGPIFNRALLNTVSFADTLVKVGLVGVLTLDNQDLYGQWYDFGDFIQTAPGFGVAVADSYYSYMMPMLTMCHVLDCELFVNDSYRQFDLVQYDFTDYKLELFNKYFKYWGMKYHPNTVDCDNDRCIIHCANFNILFSMVLPNTCFGPLVRQIFVDGVPFVVSIGYHYKELGVVMNLDVDTHRYRLSLKDLLLYAADPAMHVASASALLDLRTCCFSVAAITSGIKFQTVKPGNFNQDFYEFVKSKGLFKEGSTVDLKHFFFTQDGNAAITDYNYYKYNLPTMVDIKQLLFVLEVVYKYFEIYDGGCIPASQVIVNNYDKSAGYPFNKFGKARLYYEALSFEEQNEIYAYTKRNVLPTLTQMNLKYAISAKNRARTVAGVSILSTMTGRMFHQKCLKSIAATRGVPVVIGTTKFYGGWDDMLRHLIKDVDNPVLMGWDYPKCDRAMPNILRIVSSLVLARKHEFCCSHGDRFYRLANECAQVLSEIVMCGGCYYVKPGGTSSGDATTAFANSVFNICQAVTANVCSLMACNGHKIEDLSIRNLQKRLYSNVYRTDYVDYTFVNEYYEFLCKHFSMMILSDDGVVCYNSDYASKGYIANISVFQQVLYYQNNVFMSESKCWVENDITNGPHEFCSQHTMLVKIDGDYVYLPYPDPSRILGAGCFVDDLLKTDSVLLIERFVSLAIDAYPLVHHENEEYQKVFRVYLEYIKKLYNDLGNQILDSYSVILSTCDGLKFTDESFYKNMYLKSAVMQSVGACVVCSSQTSLRCGSCIRKPLLCCKCCYDHVMATNHKYVLSVSPYVCNAPNCDVSDVTKLYLGGMSYYCENHKPHYSFKLVMNGMVFGLYKQSCTGSPYIDDFNKIASCKWTEVDDYVLANECIERLKLFAAETQKATEEAFKQSYASATIQEIVSDREIILCWETGKVKPPLNKNYVFTGYHFTSTGKTVLGEYVFDKSELTNGVYYRATTTYKLSIGDVFVLTSHSVANLSAPTLVPQENYASIRFSSVYSVPLLFQTNVANYQHIGMKRYCTVQGPPGTGKSHLAIGLAVYYYTARVVYTAASHAAVDALCEKAYKFLNINDCTRIIPAKVRVDCYDKFKINDTTCKYVFTTINALPELVTDIVVVDEVSMLTNYELSVINARVKAKHYVYIGDPAQLPAPRVLLSKGSLEPRHFNSITKIMCCLGPDIFLGNCYRCPKEIVETVSALVYDNKLKAKNDNSSLCFKVYFKGQTTHESSSAVNIQQIYLISKFLKANPVWNSAVFISPYNSQNYVAKRILGVQTQTVDSAQGSEYDYVIYSQTAETAHSINVNRFNVAITRAKKGIFCVMSNMQLFESLNFITLPLDKIQNQTLSRLHCTTNLFKDCSKNFLGYHPAHAPSFLSVDDKYKVNEDLAVCLNICEPVLTYSRLISLMGFKLDLTLDGYSKFFITKDEAIKRVRGWVGFDVEGAHATRDNIGTNFPLQIGFSTGVDFVVEATGLFAERDCYIFKRTVAKAPPGDNFKHLIPLMSKGQKWDVVRIRIVQMLSDYLLDLSDSVVFITWSASFELTCLRYFAKLGRELNCDVCPNRATCYNSRTGYYGCWRHSYTCDYVYNPLIVDIQQWGYTGSLTSNHDIICNVHKGAHVASSDAIMTRCLAIYDCFCKSVNWNLEYPIISNEVSINTSCRLLQRVMLKAAMLCNRYNLCYDIGNPKGIACVKDYEFKFYDASPVVKSVKQLFYVYDVHKDNFKDGLCMFWNCNVDKYPSNSIVCRFDTRVLNKLNLPGCNGGSLYVNKHAFHTNPFTRTVFENLKPMPFFYYSDTPCVYVDGLESKQVDYVPLRSATCITRCNLGGAVCSKHAEDYCKYLESYNVATTAGFTFWVYKTFDFYNLWNTFTMLQSLENVIYNLVNAGHYDGRIGELPCAIMNDKVVVKINNVDTVIFKNNTSLPTNIAVELFTKRSIRHHPELKILRNLNIDICWKHVLWDYVKDSLFCSSTYGVCKYTDLNFIENLNVLFDGRDNGALEAFRKARNGVFISTGKLSSLSMIKGPQRADLNGVIVDKVGELNVEFWFAMRKDGDDVIFSRADSLSPSHYWSPQGNLGGNCAGNASGNDALARFTIFTQSRVLSTFEPRSDLERDFIDMEDSLFIAKYGLEDYAFDHIVYGSFNYKVIGGLHLLIGLFRRLKKSNLVIQEFLQYDSSIHSYFITDQECGSSKSVCTVIDLLLDDFVVIVKSLNLNCVSKVVNINVDFKDFQFMLWCNDNKIMTFYPKMQATSDWKPGYSMPVLYKYLNVPLERVSLWNYGKAINLPTGCMMNVAKYTQLCQYLNTTTLAVPVNMRVLHLGAGSDKEVAPGSAVLRQWLPSGSILVDNDLNPFVSDSLVTYFGDCMTLPFDCHWDLIISDMYDPLTKNIGDYNVSKDGFFTYICYLIRDKLSLGGSVAIKITEFSWNADLYKLMSYFAFWTVFCTNVNASSSEGFLIGINYLGKSCFEIDGNVMHANYLFWRNSTTWNGGAYSLFDMSKFSLKLAGTAVVNLRPDQLNDLVYSLIERGKLLVRDTRKEIFVGDSLVNTC.

One can recognise a CoV Nsp1 globular domain in the interval Tyr-54–Tyr-174. A BetaCoV Nsp1 C-terminal domain is found at Phe-192 to Gly-222. Residues Val-226–Tyr-488 enclose the CoV Nsp2 N-terminal domain. Zn(2+)-binding residues include Cys-365, Cys-370, Cys-386, and Cys-389. Positions Cys-365–Cys-389 are C4. The CoV Nsp2 middle domain maps to Cys-493–Leu-681. Positions Leu-697 to Ala-809 constitute a CoV Nsp2 C-terminal domain. The 113-residue stretch at Arg-811–Val-923 folds into the Ubiquitin-like 1 domain. 11 repeat units span residues Asn-945–Asp-954, Asn-955–Asp-964, Asn-965–Asp-974, Asn-975–Asp-984, Asn-985–Asp-994, Asn-995–Asp-1004, Asn-1005–Asp-1014, Asn-1015–Asp-1024, Asn-1025–Asp-1034, Asn-1035–Asp-1044, and Asn-1045–Asp-1054. The 11 X 10 AA tandem repeat of N-[DN]-D-E-D-V-V-T-G-D stretch occupies residues Asn-945–Asp-1054. Positions Asp-947–Asp-1036 are disordered. The Peptidase C16 1 domain occupies Val-1093 to Asn-1343. Cys-1131 functions as the For PL1-PRO activity in the catalytic mechanism. Zn(2+) is bound by residues Cys-1208, Cys-1211, Cys-1234, and Cys-1236. A C4-type 1 zinc finger spans residues Cys-1208–Cys-1236. Residues His-1282 and Asp-1293 each act as for PL1-PRO activity in the active site. The region spanning Glu-1321–Val-1492 is the Macro domain. One can recognise a DPUP domain in the interval Asn-1548 to Ala-1619. Residues Ala-1619 to Gln-1674 enclose the Ubiquitin-like 2 domain. Residues Ser-1688–Gln-1948 form the Peptidase C16 2 domain. Cys-1727 (for PL2-PRO activity) is an active-site residue. Zn(2+) contacts are provided by Cys-1805, Cys-1807, Cys-1839, and Cys-1841. The segment at Cys-1805–Cys-1841 adopts a C4-type 2 zinc-finger fold. Residues His-1884 and Asp-1898 each act as for PL2-PRO activity in the active site. Positions Ile-1962–Ser-2063 constitute a Nucleic acid-binding domain. A G2M domain is found at Glu-2078 to Glu-2227. 3 helical membrane-spanning segments follow: residues Ala-2196–Phe-2216, Phe-2257–Phe-2277, and Phe-2288–Ile-2308. The tract at residues Ala-2196–Val-2433 is HD1. The 62-residue stretch at Gly-2293–Asp-2354 folds into the 3Ecto domain. Disulfide bonds link Cys-2309/Cys-2333 and Cys-2324/Cys-2330. A run of 2 helical transmembrane segments spans residues Leu-2371–Leu-2391 and Phe-2413–Val-2433. The Y1 stretch occupies residues Gly-2441–Asp-2531. The CoV Nsp3 Y domain maps to Gly-2441–Gly-2808. Zn(2+)-binding residues include His-2445, Cys-2450, Cys-2455, Cys-2458, Cys-2491, His-2494, Cys-2498, and Cys-2501. The tract at residues His-2445–Cys-2458 is ZF1. Residues Cys-2491–Cys-2501 form a ZF2 region. Residues Ala-2532–Ala-2624 are Y2. Residues Ala-2532–Gly-2808 are coV-Y. The interval Cys-2625 to Gly-2707 is Y3. A Y4 region spans residues Leu-2708 to Gly-2808. Helical transmembrane passes span Leu-2814–Pro-2834, Ala-3089–Ile-3109, Val-3121–Val-3141, Val-3148–Met-3168, and Ile-3173–Ile-3193. The segment at Leu-2814–Ile-3193 is HD2. Residues Ile-3207–Gln-3304 enclose the Nsp4C domain. Residues Ser-3305–Gln-3607 enclose the Peptidase C30 domain. Residues His-3345 and Cys-3449 each act as for 3CL-PRO activity in the active site. 7 consecutive transmembrane segments (helical) span residues Ile-3621–Phe-3641, Thr-3646–Val-3666, Phe-3671–Val-3691, Phe-3714–Thr-3734, Ile-3742–Gly-3762, Leu-3770–Ile-3790, and Leu-3813–Ser-3833. Residues Ile-3621 to Ser-3833 form an HD3 region. Positions Ser-3895–Gln-3983 constitute a RdRp Nsp7 cofactor domain. The 197-residue stretch at Ala-3984–Gln-4180 folds into the RdRp Nsp8 cofactor domain. A Nsp9 ssRNA-binding domain is found at Asn-4181 to Gln-4290. In terms of domain architecture, ExoN/MTase coactivator spans Ala-4291 to Ser-4428. Positions 4364, 4367, 4373, 4380, 4406, 4409, 4417, and 4419 each coordinate Zn(2+). 2 zinc fingers span residues Cys-4364–Cys-4380 and Cys-4406–Cys-4419. Residues Phe-4433 to Tyr-4688 form the NiRAN domain. Mn(2+)-binding residues include Asn-4636 and Asp-4645. Residues Arg-4689–Tyr-4787 enclose the Nsp12 Interface domain. Residues His-4718, Cys-4724, Cys-4729, Cys-4733, and Cys-4910 each coordinate Zn(2+). One can recognise a Nsp12 RNA-dependent RNA polymerase domain in the interval Arg-4788–Gln-5355. Positions Ser-4790–Ala-5004 are rdRp Fingers N-ter. Residues Thr-5005–Pro-5043 form a rdRp Palm N-ter region. Positions Pro-5035–Gly-5197 constitute a RdRp catalytic domain. The interval Lys-5044–Gly-5102 is rdRp Fingers C-ter. 3 residues coordinate Zn(2+): His-5065, Cys-5068, and Cys-5069. The segment at Thr-5103–Gln-5238 is rdRp Palm C-ter. Residues Ser-5182, Asp-5183, and Asp-5184 contribute to the active site. The interval His-5239–Gln-5355 is rdRp Thumb. The region spanning Ser-5356–Lys-5468 is the CV ZBD domain. Residues Cys-5360, Cys-5363, Cys-5371, Cys-5374, Cys-5381, Cys-5384, His-5388, His-5394, Cys-5405, Cys-5410, Cys-5427, and His-5430 each coordinate Zn(2+). The 182-residue stretch at Ser-5611–Leu-5792 folds into the (+)RNA virus helicase ATP-binding domain. Gly-5636 to Ser-5643 is a binding site for ATP. One can recognise a (+)RNA virus helicase C-terminal domain in the interval Gly-5793–Asn-5962. An ExoN domain is found at Phe-6029–Cys-6244. Residues Asp-6047, Glu-6049, and Glu-6148 contribute to the active site. Cys-6164, Cys-6167, Cys-6183, His-6186, His-6214, Cys-6218, and His-6221 together coordinate Zn(2+). Residues His-6225 and Asp-6230 contribute to the active site. Zn(2+) is bound at residue Cys-6236. The 227-residue stretch at Tyr-6253 to Gln-6479 folds into the N7-MTase domain. Asp-6288 to Gly-6294 is an S-adenosyl-L-methionine binding site. Positions Cys-6366–Thr-6380 are gpppA-binding. The Zn(2+) site is built by Cys-6404, Cys-6425, Cys-6436, and His-6439. One can recognise a Nsp15 N-terminal oligomerization domain in the interval Ser-6480–Arg-6540. An AV-Nsp11N/CoV-Nsp15M domain is found at Ser-6541 to Val-6661. The NendoU domain maps to Glu-6711–Pro-6850. Active-site residues include His-6741, His-6756, Lys-6796, Lys-6899, Asp-6983, Lys-7023, and Glu-7056. Residues Thr-6855–Val-7149 form the Nidovirus-type SAM-dependent 2'-O-MTase domain.

It belongs to the coronaviruses polyprotein 1ab family. As to quaternary structure, interacts with host PHB and PHB2. In terms of assembly, interacts with papain-like protease nsp3 and non-structural protein 6. Monomer. Homodimer. Only the homodimer shows catalytic activity. As to quaternary structure, interacts with nsp8 and nsp12 to form the replication-transcription complex (RTC): nsp12, nsp7, two subunits of nsp8, and up to two subunits of nsp13. In terms of assembly, interacts with nsp7, nsp13 and nsp12 to form the replication-transcription complex (RTC): nsp12, nsp7, two subunits of nsp8, and up to two subunits of nsp13. Interacts with nsp12. As to quaternary structure, interacts with proofreading exoribonuclease nsp14 and 2'-O-methyltransferase nsp16; these interactions enhance nsp14 and nsp16 enzymatic activities. In terms of assembly, interacts with nsp7 and nsp8 to form the replication-transcription complex (RTC): nsp12, nsp7, two subunits of nsp8, and up to two subunits of nsp13. Interacts with nsp9. Interacts with nsp8 to form the replication-transcription complex (RTC): nsp12, nsp7, two subunits of nsp8, and up to two subunits of nsp13. The cofactor is Mn(2+). It depends on Mg(2+) as a cofactor. In terms of processing, specific enzymatic cleavages in vivo by its own proteases yield mature proteins. 3CL-PRO and PL-PRO proteinases are autocatalytically processed.

It is found in the host membrane. The protein resides in the host cytoplasm. Its subcellular location is the host perinuclear region. The protein localises to the host endoplasmic reticulum-Golgi intermediate compartment. The catalysed reaction is RNA(n) + a ribonucleoside 5'-triphosphate = RNA(n+1) + diphosphate. It catalyses the reaction ATP + H2O = ADP + phosphate + H(+). The enzyme catalyses Thiol-dependent hydrolysis of ester, thioester, amide, peptide and isopeptide bonds formed by the C-terminal Gly of ubiquitin (a 76-residue protein attached to proteins as an intracellular targeting signal).. It carries out the reaction a 5'-end (N(7)-methyl 5'-triphosphoguanosine)-ribonucleoside in mRNA + S-adenosyl-L-methionine = a 5'-end (N(7)-methyl 5'-triphosphoguanosine)-(2'-O-methyl-ribonucleoside) in mRNA + S-adenosyl-L-homocysteine + H(+). The catalysed reaction is uridylyl-uridylyl-ribonucleotide-RNA = a 3'-end uridylyl-2',3'-cyclophospho-uridine-RNA + a 5'-end dephospho-ribonucleoside-RNA. It catalyses the reaction a 5'-end diphospho-ribonucleoside in mRNA + GTP + H(+) = a 5'-end (5'-triphosphoguanosine)-ribonucleoside in mRNA + diphosphate. The enzyme catalyses a 5'-end (5'-triphosphoguanosine)-ribonucleoside in mRNA + S-adenosyl-L-methionine = a 5'-end (N(7)-methyl 5'-triphosphoguanosine)-ribonucleoside in mRNA + S-adenosyl-L-homocysteine. The replicase polyprotein of coronaviruses is a multifunctional protein: it contains the activities necessary for the transcription of negative stranded RNA, leader RNA, subgenomic mRNAs and progeny virion RNA as well as proteinases responsible for the cleavage of the polyprotein into functional products. Functionally, inhibits host translation by interacting with the 40S ribosomal subunit. The nsp1-40S ribosome complex further induces an endonucleolytic cleavage near the 5'UTR of host mRNAs, targeting them for degradation. Viral mRNAs are not susceptible to nsp1-mediated endonucleolytic RNA cleavage thanks to the presence of a 5'-end leader sequence and are therefore protected from degradation. By suppressing host gene expression, nsp1 facilitates efficient viral gene expression in infected cells and evasion from host immune response. Its function is as follows. May play a role in the modulation of host cell survival signaling pathway by interacting with host PHB and PHB2. Indeed, these two proteins play a role in maintaining the functional integrity of the mitochondria and protecting cells from various stresses. In terms of biological role, responsible for the cleavages located at the N-terminus of the replicase polyprotein. In addition, PL-PRO possesses a deubiquitinating/deISGylating activity and processes both 'Lys-48'- and 'Lys-63'-linked polyubiquitin chains from cellular substrates. Participates together with nsp4 in the assembly of virally-induced cytoplasmic double-membrane vesicles necessary for viral replication. Antagonizes innate immune induction of type I interferon by blocking the phosphorylation, dimerization and subsequent nuclear translocation of host IRF3. Also prevents host NF-kappa-B signaling. Participates in the assembly of virally-induced cytoplasmic double-membrane vesicles necessary for viral replication. Functionally, cleaves the C-terminus of replicase polyprotein at 11 sites. Recognizes substrates containing the core sequence [ILMVF]-Q-|-[SGACN]. Also able to bind an ADP-ribose-1''-phosphate (ADRP). Its function is as follows. Plays a role in the initial induction of autophagosomes from host endoplasmic reticulum. Later, limits the expansion of these phagosomes that are no longer able to deliver viral components to lysosomes. In terms of biological role, forms a hexadecamer with nsp8 (8 subunits of each) that may participate in viral replication by acting as a primase. Alternatively, may synthesize substantially longer products than oligonucleotide primers. Forms a hexadecamer with nsp7 (8 subunits of each) that may participate in viral replication by acting as a primase. Alternatively, may synthesize substantially longer products than oligonucleotide primers. Functionally, forms a primer, NSP9-pU, which is utilized by the polymerase for the initiation of RNA chains. Interacts with ribosome signal recognition particle RNA (SRP). Together with NSP8, suppress protein integration into the cell membrane, thereby disrupting host immune defenses. Its function is as follows. Plays a pivotal role in viral transcription by stimulating both nsp14 3'-5' exoribonuclease and nsp16 2'-O-methyltransferase activities. Therefore plays an essential role in viral mRNAs cap methylation. In terms of biological role, RNA-directed RNA polymerase that catalyzes the transcription of viral genomic and subgenomic RNAs. Acts in complex with nsp7 and nsp8 to transcribe both the minus and positive strands of genomic RNA. The kinase-like NiRAN domain of NSP12 attaches one or more nucleotides to the amino terminus of NSP9, forming a covalent RNA-protein intermediate that serves as transcription/replication primer. Subgenomic RNAs (sgRNAs) are formed by discontinuous transcription: The polymerase has the ability to pause at transcription-regulating sequences (TRS) and jump to the leader TRS, resulting in a major deletion. This creates a series of subgenomic RNAs that are replicated, transcribed and translated. In addition, Nsp12 is a subunit of the viral RNA capping enzyme that catalyzes the RNA guanylyltransferase reaction for genomic and sub-genomic RNAs. Subsequently, the NiRAN domain transfers RNA to GDP, and forms the core cap structure GpppA-RNA. Multi-functional protein with a zinc-binding domain in N-terminus displaying RNA and DNA duplex-unwinding activities with 5' to 3' polarity. Activity of helicase is dependent on magnesium. Functionally, plays a role in viral RNA synthesis through two distinct activities. The N7-guanine methyltransferase activity plays a role in the formation of the cap structure GpppA-RNA. The proofreading exoribonuclease reduces the sensitivity of the virus to RNA mutagens during replication. This activity acts on both ssRNA and dsRNA in a 3'-5' direction. Its function is as follows. Plays a role in viral transcription/replication and prevents the simultaneous activation of host cell dsRNA sensors, such as MDA5/IFIH1, OAS, and PKR. Acts by degrading the 5'-polyuridines generated during replication of the poly(A) region of viral genomic and subgenomic RNAs. Catalyzes a two-step reaction in which a 2'3'-cyclic phosphate (2'3'-cP) is first generated by 2'-O transesterification, which is then hydrolyzed to a 3'-phosphate (3'-P). If not degraded, poly(U) RNA would hybridize with poly(A) RNA tails and activate host dsRNA sensors. In terms of biological role, methyltransferase that mediates mRNA cap 2'-O-ribose methylation to the 5'-cap structure of viral mRNAs. N7-methyl guanosine cap is a prerequisite for binding of nsp16. Therefore plays an essential role in viral mRNAs cap methylation which is essential to evade immune system. This Homo sapiens (Human) protein is Replicase polyprotein 1ab (rep).